Reading from the N-terminus, the 578-residue chain is Penicillin-binding protein activator LpoA (578 aa).

The first 30 residues, 1–30, serve as a signal peptide directing secretion; it reads MPTILVQSYGFRQKMKTIFIPTALALLLAA. A lipid anchor (N-palmitoyl cysteine) is attached at Cys-31. The S-diacylglycerol cysteine moiety is linked to residue Cys-31.

This sequence belongs to the LpoA family. Interacts with PBP1a.

Its subcellular location is the cell outer membrane. In terms of biological role, regulator of peptidoglycan synthesis that is essential for the function of penicillin-binding protein 1A (PBP1a). This is Penicillin-binding protein activator LpoA from Glaesserella parasuis serovar 5 (strain SH0165) (Haemophilus parasuis).